The chain runs to 122 residues: Large ribosomal subunit protein uL14 (122 aa).

The protein belongs to the universal ribosomal protein uL14 family. In terms of assembly, part of the 50S ribosomal subunit. Forms a cluster with proteins L3 and L19. In the 70S ribosome, L14 and L19 interact and together make contacts with the 16S rRNA in bridges B5 and B8.

Binds to 23S rRNA. Forms part of two intersubunit bridges in the 70S ribosome. This is Large ribosomal subunit protein uL14 from Borrelia recurrentis (strain A1).